Reading from the N-terminus, the 81-residue chain is Putative membrane protein insertion efficiency factor 1 (81 aa).

This sequence belongs to the UPF0161 family.

It localises to the cell membrane. Could be involved in insertion of integral membrane proteins into the membrane. This Bacillus licheniformis (strain ATCC 14580 / DSM 13 / JCM 2505 / CCUG 7422 / NBRC 12200 / NCIMB 9375 / NCTC 10341 / NRRL NRS-1264 / Gibson 46) protein is Putative membrane protein insertion efficiency factor 1.